The chain runs to 246 residues: Tyrosine recombinase XerD-like (246 aa).

Residues 1–72 enclose the Core-binding (CB) domain; it reads MINDINNFIE…AVNQFLFFLY (72 aa). The Tyr recombinase domain maps to 84–246; the sequence is QETEKITLAQ…TPITLERYYR (163 aa). Catalysis depends on residues Lys149 and Arg212. The active-site O-(3'-phospho-DNA)-tyrosine intermediate is Tyr244.

It belongs to the 'phage' integrase family. XerD-like subfamily.

It is found in the cytoplasm. Putative tyrosine recombinase. Not involved in the cutting and rejoining of the recombining DNA molecules on dif(SL) site. This is Tyrosine recombinase XerD-like from Streptococcus agalactiae serotype V (strain ATCC BAA-611 / 2603 V/R).